The primary structure comprises 2878 residues: Trinucleotide repeat-containing gene 18 protein (2878 aa).

Disordered stretches follow at residues 1–54 (MDGR…KYMA) and 102–194 (TQKD…SSRL). Polar residues predominate over residues 119–128 (TPSSRTPSGH). Basic and acidic residues-rich tracts occupy residues 137-149 (SSRE…RAGR), 158-169 (GKKDPRAREEVS), and 179-194 (QEAR…SSRL). Residue serine 199 is modified to Phosphoserine. Disordered stretches follow at residues 259–289 (ARPC…AGVY), 313–442 (FDER…KWKP), 487–507 (MPRA…AAHG), 540–655 (SPFG…DDEC), 865–1002 (AQEH…ALFT), 1033–1104 (ADGL…LESP), 1127–1146 (LEAQ…SEVS), 1171–1228 (LGTQ…DCDL), 1429–1535 (ELVK…DSSS), 1613–1668 (LGLS…DEDE), 1694–1718 (VPKN…RTLK), and 1737–1787 (EARS…GEQA). The span at 264 to 283 (SPLPPPPPLPPKGPPAPPSS) shows a compositional bias: pro residues. 2 stretches are compositionally biased toward basic and acidic residues: residues 327–337 (RDVRAREREPG) and 350–362 (RLER…EKSS). Low complexity predominate over residues 376–390 (PPAARSSRSSPDARA). Residues 396–411 (ELLKPEADPRPCERAP) show a composition bias toward basic and acidic residues. Phosphoserine is present on serine 540. Lysine 549 participates in a covalent cross-link: Glycyl lysine isopeptide (Lys-Gly) (interchain with G-Cter in SUMO2). Composition is skewed to basic and acidic residues over residues 580–589 (LKRDPERPES) and 865–881 (AQEH…KRSL). Pro residues predominate over residues 958–969 (SSPPPASPPPTP). Basic and acidic residues predominate over residues 972–993 (TRKEEAPENVVEKKDLELEKET). A phosphoserine mark is found at serine 1053 and serine 1062. Basic and acidic residues predominate over residues 1068–1088 (EPPRDSPEEEQLADREVKAEV). A coiled-coil region spans residues 1410 to 1442 (LDFRMRLAEVQRRYKEKQRELVKLQRRRDSGDR). Positions 1429 to 1448 (ELVKLQRRRDSGDRHEDAHR) are enriched in basic and acidic residues. Residues 1449–1463 (SLARRGPGRPRKRTH) show a composition bias toward basic residues. Phosphoserine is present on serine 1469. Low complexity predominate over residues 1478–1492 (SSSGKGLSSKSLLTS). A compositionally biased stretch (acidic residues) spans 1745-1775 (SSEEDSFDQDDSSEEEEEELEEEEEDEEEEG). Phosphoserine is present on residues serine 1789 and serine 1795. Positions 1825–1835 (EQKARKKEERQ) are enriched in basic and acidic residues. 3 disordered regions span residues 1825–2040 (EQKA…GAVS), 2052–2080 (FEAN…TPAP), and 2226–2681 (LLVP…RLPS). Over residues 1876-1890 (AAPGPGSRASGPSSP) the composition is skewed to low complexity. Basic and acidic residues-rich tracts occupy residues 1891 to 1900 (DKAKLVSEKG), 1925 to 1936 (LWTRRRSERIFL), 1966 to 1978 (PRKD…DRKD), and 2024 to 2034 (RGKEAKKENRG). Threonine 2077 bears the Phosphothreonine mark. The span at 2238 to 2247 (TSKDTGEVKE) shows a compositional bias: basic and acidic residues. A compositionally biased stretch (basic residues) spans 2261-2270 (ARGRGRKPST). Basic and acidic residues-rich tracts occupy residues 2307-2316 (STPEPVDKRA) and 2409-2419 (AKEALLLREDP). Low complexity-rich tracts occupy residues 2460–2470 (EPGPGLPLEDP), 2491–2520 (TTSS…SGSE), and 2540–2578 (RTCS…SSST). Residues 2579–2591 (TDEDSSCSSDEEA) show a composition bias toward acidic residues. Residues 2631 to 2641 (TQPPPQPPPQP) show a composition bias toward pro residues. The residue at position 2681 (serine 2681) is a Phosphoserine. Residues 2727–2872 (EMIRIGDCAV…PTTGMIFSTD (146 aa)) form the BAH domain.

The protein is Trinucleotide repeat-containing gene 18 protein (Tnrc18) of Mus musculus (Mouse).